The chain runs to 320 residues: Cytochrome c biogenesis protein CcsA (320 aa).

7 helical membrane-spanning segments follow: residues 13-33 (ISFS…FLLV), 46-66 (GMIV…IYSG), 73-93 (LYES…VSYL), 147-167 (MVLG…LLVI), 226-246 (IISL…VWAN), 259-274 (ETWA…IYFH), and 289-309 (VASM…LLGI).

This sequence belongs to the CcmF/CycK/Ccl1/NrfE/CcsA family. As to quaternary structure, may interact with Ccs1.

The protein resides in the plastid. It localises to the chloroplast thylakoid membrane. Functionally, required during biogenesis of c-type cytochromes (cytochrome c6 and cytochrome f) at the step of heme attachment. In Gossypium barbadense (Sea Island cotton), this protein is Cytochrome c biogenesis protein CcsA.